Here is a 466-residue protein sequence, read N- to C-terminus: Major capsid protein (466 aa).

Belongs to the NCLDV major capsid protein family. Homotrimer.

The protein localises to the virion. Major capsid protein that self assembles to form an icosahedral capsid. Represents around 50% of the total virion protein mass. The sequence is that of Major capsid protein (MCP) from Invertebrate iridescent virus 3 (IIV-3).